A 178-amino-acid chain; its full sequence is Ribosome maturation factor RimM (178 aa).

The PRC barrel domain maps to 101–178 (ADEYYWYQLE…VMRVEWDADF (78 aa)).

It belongs to the RimM family. Binds ribosomal protein uS19.

The protein resides in the cytoplasm. In terms of biological role, an accessory protein needed during the final step in the assembly of 30S ribosomal subunit, possibly for assembly of the head region. Essential for efficient processing of 16S rRNA. May be needed both before and after RbfA during the maturation of 16S rRNA. It has affinity for free ribosomal 30S subunits but not for 70S ribosomes. This is Ribosome maturation factor RimM from Pseudomonas fluorescens (strain Pf0-1).